The sequence spans 535 residues: MNKKKLSIRWKITILSYILVIFSFLIGGIVLIGNIQHTEERELKKRLMNTARTVSEMTEVKEALARKKQTEAVRHAVEEIRMINEADYIVVMDMNHIRYTHPVSTSIGKKSEGADEEAAFAEHIYFSEAKGEIGTAVRAFYPVKDQDLNQIGVVLVGKTLPGIADILLHLKRDIAFIVVLTLGFGLAGSFLLARHIKKQMFQLEPHEIVRMYEERTATFHSMNEGVIAIDNRLVITIFNEKAKQIFEVQGDLIGKVIWEVLKDSRLPEIVERNKAVYNEEIRVSGKVIMSSRIPIVMKKKVIGAVAIFQDRTEAAKMAEELTGVRNFVEALRVQNHEHMNKLHTIAGLIQLGKSEKALQLAFQASTEQENVTEFLHRSIQNDAAAGLLLSKIRRGRELGIAVHIDENSSLQQFPEHVDQHDIVVLLGNLIENAFGSFETVQSEDKRIDISIEQTDDILAILIEDNGCGIEPTHMPRLYDKGFTVNKTGGTGYGLYLVKQIIDKGSGTIEVDSHAGQGTSFSIVFPMKGEEAQHGS.

At 1–11 (MNKKKLSIRWK) the chain is on the cytoplasmic side. A helical transmembrane segment spans residues 12–32 (ITILSYILVIFSFLIGGIVLI). The Extracellular segment spans residues 33–172 (GNIQHTEERE…IADILLHLKR (140 aa)). The chain crosses the membrane as a helical span at residues 173-193 (DIAFIVVLTLGFGLAGSFLLA). At 194-535 (RHIKKQMFQL…MKGEEAQHGS (342 aa)) the chain is on the cytoplasmic side. Residues 213-276 (EERTATFHSM…PEIVERNKAV (64 aa)) enclose the PAS domain. The 196-residue stretch at 333-528 (VQNHEHMNKL…SFSIVFPMKG (196 aa)) folds into the Histidine kinase domain. A Phosphohistidine; by autocatalysis modification is found at His336.

Its subcellular location is the cell membrane. It carries out the reaction ATP + protein L-histidine = ADP + protein N-phospho-L-histidine.. Functionally, member of the two-component regulatory system DctS/DctR. Probably activates DctR by phosphorylation. Essential for expression of dctP. This chain is Probable C4-dicarboxylate sensor kinase (dctS), found in Bacillus subtilis (strain 168).